The following is a 199-amino-acid chain: MQYPRPIAKLIEGFTRLPGIGPKTASRLAFHVLDMKEDDVLEFAKALVHAKRDLTYCSQCHNITDTDPCQICEDKHRDRTTICVVQESRDLIAMEKMREYTGLYHVLHGAISPMDGIGPEDIKIAELIKRLQDDESVKEVIVATNPTIEGEATAMYISRLIKPTGIKVTRLAHGLPVGGDLEYADEVTLSKAIEGRREL.

Residues 57-72 (CSQCHNITDTDPCQIC) form a C4-type zinc finger. The region spanning 80–176 (TTICVVQESR…KVTRLAHGLP (97 aa)) is the Toprim domain.

It belongs to the RecR family.

May play a role in DNA repair. It seems to be involved in an RecBC-independent recombinational process of DNA repair. It may act with RecF and RecO. The chain is Recombination protein RecR from Shouchella clausii (strain KSM-K16) (Alkalihalobacillus clausii).